The following is a 529-amino-acid chain: MKEIIKSEIFKILGRDFVLEKPKDKSLAHYATPLAFSLAKELKKSPVAIANELACKFENSKIFEVSAVNGYLNFKLKGEFLDEISKDALKNGDKFASGKARQDGSTFIEYISANPTGPLHIGHVRGAVYGDTLARIGTHLGYKIFTEYYINDAGNQIDLLGTSISLAARDVLFHENVEYPQKYYRGEYIVDIANEALKKFGKEIFYDEARNLELAEFGKDIVLDIIKKDLAGVGISIQGWASEKALYKELEPTIEKLKRSNQMYEKEGATYIASTTLGDDNDRVVVRNDGRPTYLAGDIIYHNDKFERNYDHYINIWGADHHGYIARLKAAIHFLGYDENRLEIILMQMVSLLKDGKPYKMSKRAGNAVLMSDIVEEIGSDALRFIFISKANTSSLEFDIDELKKEDSSNPIFYINYAHARVNQIFAKAGKSVSDVLDASLENLDDNAKNLLFEALILPEILEDAFASRQLQKVSDYLKSLAASFHKFYNENRVIGSANEESLLKLFAVVALSLRTALSLIGITAKDRM.

A 'HIGH' region motif is present at residues 113–123 (ANPTGPLHIGH).

The protein belongs to the class-I aminoacyl-tRNA synthetase family. In terms of assembly, monomer.

Its subcellular location is the cytoplasm. The enzyme catalyses tRNA(Arg) + L-arginine + ATP = L-arginyl-tRNA(Arg) + AMP + diphosphate. The polypeptide is Arginine--tRNA ligase (Campylobacter curvus (strain 525.92)).